Consider the following 1014-residue polypeptide: Klotho (1014 aa).

Positions 1–34 (MLARAPPRRPPRLVLLRLLLLHLLLLALRARCLS) are cleaved as a signal peptide. Over 35–982 (AEPGQGAQTW…TECGFFQTRK (948 aa)) the chain is Extracellular. Glycosyl hydrolase-1 regions lie at residues 59–508 (LHDT…DNGF) and 517–955 (LEGT…SNGF). 6 N-linked (GlcNAc...) asparagine glycosylation sites follow: N161, N285, N346, N609, N614, and N696. A helical membrane pass occupies residues 983-1003 (SLLVFISFLVFTFIISLALIF). Over 1004-1014 (HYSKKGQRSYK) the chain is Cytoplasmic.

Belongs to the glycosyl hydrolase 1 family. Klotho subfamily. As to quaternary structure, homodimer. Interacts with FGF23 and FGFR1. Post-translationally, N-glycosylated. Membrane-bound protein is present in distal renal tubules, inner ear, ependymal cells of brain choroid plexus, elongating spermatids and mature oocytes (at protein level). Soluble peptide is present in serum (100 pM) and cerebrospinal fluid. Expressed strongly in kidney, moderately in brain choroid plexus, and at low levels in pituitary, placenta, skeletal muscle, urinary bladder, aorta, pancreas, testis, ovary, colon, thyroid gland and adipocytes.

The protein resides in the cell membrane. It is found in the apical cell membrane. The protein localises to the secreted. It carries out the reaction a beta-D-glucuronoside + H2O = D-glucuronate + an alcohol. Inhibited by D-saccharic acid 1,4-lactone and taurocholic acid. In terms of biological role, may have weak glycosidase activity towards glucuronylated steroids. However, it lacks essential active site Glu residues at positions 241 and 874, suggesting it may be inactive as a glycosidase in vivo. May be involved in the regulation of calcium and phosphorus homeostasis by inhibiting the synthesis of active vitamin D. Essential factor for the specific interaction between FGF23 and FGFR1. The Klotho peptide generated by cleavage of the membrane-bound isoform may be an anti-aging circulating hormone which would extend life span by inhibiting insulin/IGF1 signaling. This is Klotho (Kl) from Mus musculus (Mouse).